Consider the following 72-residue polypeptide: Large ribosomal subunit protein uL29 (72 aa).

This sequence belongs to the universal ribosomal protein uL29 family.

The protein is Large ribosomal subunit protein uL29 of Caldicellulosiruptor bescii (strain ATCC BAA-1888 / DSM 6725 / KCTC 15123 / Z-1320) (Anaerocellum thermophilum).